The primary structure comprises 815 residues: uncharacterized protein (815 aa).

An N-terminal signal peptide occupies residues 1–25 (MVVMKKKRILIVSAIVLLFLTVASA). Transmembrane regions (helical) follow at residues 127–147 (FGEALFIFTCAYVVYLFCVRG), 157–177 (ILFICVMVIGGLWMSNAGYYM), 311–331 (SFIAVVASIVIGIPFLALAFF), 333–353 (FLLQVVALVIVFFVPFAFILA), 372–392 (VYLLKAMLGVIVLFVYVTCFI), and 401–421 (GFGMYLLNVAVLASILWIGFH). Residues 483–815 (KDGSNADGVT…DRLRRDERTR (333 aa)) are disordered. Residues 513 to 543 (HAISRTPQKETANGIANHNSRSLKRNPQTLS) are compositionally biased toward polar residues. 2 stretches are compositionally biased toward basic and acidic residues: residues 544–563 (KEQEKQKQKEAFANAKENKQ) and 599–614 (QDKKDESARTDQKEYV). Residues 619-630 (KQPNNQQQTDDA) are compositionally biased toward polar residues. The segment covering 648–658 (ENEKDTERTDQ) has biased composition (basic and acidic residues). Residues 665-678 (EQNQNLETDQQQDF) are compositionally biased toward polar residues. The segment covering 696 to 705 (KTAEIKRSDQ) has biased composition (basic and acidic residues). The span at 720-732 (SPQSTKVENQPIA) shows a compositional bias: polar residues. The segment covering 734–757 (NERKIRPSEPAKVHSDGIRVDEKQ) has biased composition (basic and acidic residues). A compositionally biased stretch (polar residues) spans 773-793 (PSSQTIKRTEQSVNSFDQVSL). Residues 796 to 815 (IARRSSSKVEDRLRRDERTR) show a composition bias toward basic and acidic residues.

The protein localises to the cell membrane. This is an uncharacterized protein from Bacillus subtilis (strain 168).